Here is a 70-residue protein sequence, read N- to C-terminus: Protein SlyX homolog (70 aa).

This sequence belongs to the SlyX family.

This Shewanella frigidimarina (strain NCIMB 400) protein is Protein SlyX homolog.